Here is a 225-residue protein sequence, read N- to C-terminus: MKLTYHGHSVVKIETNGKTIFIDPFITGNPLTDLKAEDVHVDVILLTHGHNDHVGDTVSLAKKNDALVIAPYELATYLSWKGVRIHPMHIGGSFTFDFGKVKLTQAFHGSSYVEENETIVYTGMPSGILFHAEGKTIYHAGDTALFSDMKLIGEMNDIDVAFLPIGDNFTMGPKDAAIAAKWLKAKMVVPIHYNTFPVIQQDPQQFVSMIEGIGRVLRIGESIEL.

This sequence belongs to the UPF0173 family.

The chain is UPF0173 metal-dependent hydrolase Aflv_0488 from Anoxybacillus flavithermus (strain DSM 21510 / WK1).